Reading from the N-terminus, the 86-residue chain is Putative membrane protein insertion efficiency factor (86 aa).

The segment at 66 to 86 (FSKGGFDPVPPHDGVPGKKED) is disordered.

This sequence belongs to the UPF0161 family.

It localises to the cell inner membrane. Functionally, could be involved in insertion of integral membrane proteins into the membrane. In Chlorobium luteolum (strain DSM 273 / BCRC 81028 / 2530) (Pelodictyon luteolum), this protein is Putative membrane protein insertion efficiency factor.